The sequence spans 906 residues: Nuclear factor NF-kappa-B p100 subunit (906 aa).

Residues 34–223 form the RHD domain; that stretch reads AVGPYLVIIE…DPIHDSKSPG (190 aa). A Nuclear localization signal motif is present at residues 336–340; sequence RNRKK. A GRR region spans residues 345 to 374; the sequence is FPQHFGGGSHMGGAGGAGGFGAGGGGNLSF. ANK repeat units lie at residues 472–501, 511–540, 544–573, 582–611, 616–646, and 650–679; these read NGDT…SIPS, LQQT…NPTL, YGNS…SATP, QGLL…DVNG, GGRT…NVNS, and AGNT…DVQR. Disordered stretches follow at residues 677-734 and 857-906; these read VQRE…GPRQ and EPLE…QQVH. Residues 684 to 695 show a composition bias toward low complexity; it reads PVSPSSVRVPSS. Residues 697-708 show a composition bias toward acidic residues; the sequence is TDGDPEEQEQEQ. Positions 771-857 constitute a Death domain; the sequence is RNHLLSLDTD…GAVRMLRKPE (87 aa).

Component of the NF-kappa-B RelB-p52 complex. Post-translationally, while translation occurs, the particular unfolded structure after the GRR repeat promotes the generation of p52 making it an acceptable substrate for the proteasome. This process is known as cotranslational processing. The processed form is active and the unprocessed form acts as an inhibitor (I kappa B-like), being able to form cytosolic complexes with NF-kappa B, trapping it in the cytoplasm. Complete folding of the region downstream of the GRR repeat precludes processing. In terms of processing, constitutive processing is tightly suppressed by its C-terminal processing inhibitory domain, named PID, which contains the death domain.

The protein resides in the nucleus. Its subcellular location is the cytoplasm. Its function is as follows. NF-kappa-B is a pleiotropic transcription factor present in almost all cell types and is the endpoint of a series of signal transduction events that are initiated by a vast array of stimuli related to many biological processes such as inflammation, immunity, differentiation, cell growth, tumorigenesis and apoptosis. NF-kappa-B is a homo- or heterodimeric complex formed by the Rel-like domain-containing proteins RELA/p65, RELB, NFKB1/p105, NFKB1/p50, REL and NFKB2/p52. The dimers bind at kappa-B sites in the DNA of their target genes and the individual dimers have distinct preferences for different kappa-B sites that they can bind with distinguishable affinity and specificity. Different dimer combinations act as transcriptional activators or repressors, respectively. NF-kappa-B is controlled by various mechanisms of post-translational modification and subcellular compartmentalization as well as by interactions with other cofactors or corepressors. NF-kappa-B complexes are held in the cytoplasm in an inactive state complexed with members of the NF-kappa-B inhibitor (I-kappa-B) family. In a conventional activation pathway, I-kappa-B is phosphorylated by I-kappa-B kinases (IKKs) in response to different activators, subsequently degraded thus liberating the active NF-kappa-B complex which translocates to the nucleus. In a non-canonical activation pathway, the MAP3K14-activated CHUK/IKKA homodimer phosphorylates NFKB2/p100 associated with RelB, inducing its proteolytic processing to NFKB2/p52 and the formation of NF-kappa-B RelB-p52 complexes. The NF-kappa-B heterodimeric RelB-p52 complex is a transcriptional activator. NFKB2 appears to have dual functions such as cytoplasmic retention of attached NF-kappa-B proteins by p100 and generation of p52 by a cotranslational processing. The proteasome-mediated process ensures the production of both p52 and p100 and preserves their independent function. p52 binds to the kappa-B consensus sequence 5'-GGRNNYYCC-3', located in the enhancer region of genes involved in immune response and acute phase reactions. In concert with RELB, may play a role in the regulation of the circadian clock. The polypeptide is Nuclear factor NF-kappa-B p100 subunit (NFKB2) (Gallus gallus (Chicken)).